The chain runs to 109 residues: UPF0060 membrane protein YfjF (109 aa).

A run of 4 helical transmembrane segments spans residues 6 to 26 (ILLF…VWLW), 32 to 52 (PAGY…LPTF), 61 to 81 (VYAA…WLVD), and 87 to 107 (LYDW…LFAP).

This sequence belongs to the UPF0060 family.

The protein resides in the cell membrane. This is UPF0060 membrane protein YfjF (yfjF) from Bacillus subtilis (strain 168).